Consider the following 236-residue polypeptide: 27 kDa hemolymph protein (236 aa).

The signal sequence occupies residues 1-17 (MMWKLIIVTILAVGVLC).

As to quaternary structure, monomer. In terms of tissue distribution, hemolymph.

The protein localises to the secreted. This chain is 27 kDa hemolymph protein, found in Galleria mellonella (Greater wax moth).